Reading from the N-terminus, the 218-residue chain is Dual specificity protein phosphatase TpbA (218 aa).

The N-terminal stretch at 1–28 (MHRSPLAWLRLLLAAVLGAFLLGGPLHA) is a signal peptide. Residues 44-188 (DPSINLYRMS…YVRGADVDGL (145 aa)) form the Tyrosine-protein phosphatase domain. D105 serves as the catalytic Proton donor/acceptor. The Phosphocysteine intermediate role is filled by C132.

This sequence belongs to the protein-tyrosine phosphatase family. As to quaternary structure, monomer in solution.

It is found in the periplasm. The catalysed reaction is O-phospho-L-tyrosyl-[protein] + H2O = L-tyrosyl-[protein] + phosphate. It catalyses the reaction O-phospho-L-threonyl-[protein] + H2O = L-threonyl-[protein] + phosphate. The enzyme catalyses O-phospho-L-seryl-[protein] + H2O = L-seryl-[protein] + phosphate. Its activity is regulated as follows. The phosphatase activity is completely inhibited by trisodium orthovanadate, a tyrosine phosphatase specific inhibitor. Functionally, phosphatase that regulates diverse phenotypes in P.aeruginosa via regulation of the concentration of cellular c-di-GMP. Acts by dephosphorylating the membrane-anchored diguanylate cyclase TpbB at tyrosine and serine/threonine sites, leading to inactivation of TpbB and reduced c-di-GMP production. The reduced cellular c-di-GMP concentration leads to reduced adhesin expression, reduced extracellular polysaccharide (EPS) production, pellicule production, cell aggregation and biofilm formation, and enhanced swimming and swarming. It affects colony morphology and controls rugose colony formation. TpbA also acts as a positive regulator of extracellular DNA (eDNA, a major component of the biofilm matrix) and cell lysis by reducing c-di-GMP concentrations. In vitro shows phosphatase activity toward p-nitrophenyl phosphate (pNPP), tyrosine phosphopeptides and a threonine phosphopeptide. Does not have phosphodiesterases (PDE) activity, and cannot degrade c-di-GMP. The sequence is that of Dual specificity protein phosphatase TpbA from Pseudomonas aeruginosa (strain UCBPP-PA14).